We begin with the raw amino-acid sequence, 122 residues long: MIQPQTHLNVADNSGARELMCIRIIGASNRRYAHIGDVIVAVIKEAIPNMPLERSEVVRAVIVRTCKELKRDNGIIIRYDDNAAVVIDQEGNPKGTRIFGAIARELRELNFTKIVSLAPEVL.

The protein belongs to the universal ribosomal protein uL14 family. In terms of assembly, part of the 50S ribosomal subunit.

It localises to the plastid. The protein localises to the chloroplast. Its function is as follows. Binds to 23S rRNA. The protein is Large ribosomal subunit protein uL14c of Nicotiana tomentosiformis (Tobacco).